The chain runs to 177 residues: Nucleoside triphosphate/diphosphate phosphatase (177 aa).

Catalysis depends on Arg23, which acts as the Proton donor. Mg(2+) contacts are provided by Asn87, Asp103, Asp105, Asp107, Asp120, and Glu123.

The protein belongs to the Ntdp family. The cofactor is Mg(2+).

It carries out the reaction a ribonucleoside 5'-triphosphate + H2O = a ribonucleoside 5'-diphosphate + phosphate + H(+). The enzyme catalyses a ribonucleoside 5'-diphosphate + H2O = a ribonucleoside 5'-phosphate + phosphate + H(+). Its function is as follows. Has nucleoside phosphatase activity towards nucleoside triphosphates and nucleoside diphosphates. This chain is Nucleoside triphosphate/diphosphate phosphatase, found in Streptococcus thermophilus (strain CNRZ 1066).